The chain runs to 178 residues: Large ribosomal subunit protein uL5 (178 aa).

This sequence belongs to the universal ribosomal protein uL5 family. In terms of assembly, part of the 50S ribosomal subunit; part of the 5S rRNA/L5/L18/L25 subcomplex. Contacts the 5S rRNA and the P site tRNA. Forms a bridge to the 30S subunit in the 70S ribosome.

Its function is as follows. This is one of the proteins that bind and probably mediate the attachment of the 5S RNA into the large ribosomal subunit, where it forms part of the central protuberance. In the 70S ribosome it contacts protein S13 of the 30S subunit (bridge B1b), connecting the 2 subunits; this bridge is implicated in subunit movement. Contacts the P site tRNA; the 5S rRNA and some of its associated proteins might help stabilize positioning of ribosome-bound tRNAs. This chain is Large ribosomal subunit protein uL5, found in Wolbachia pipientis subsp. Culex pipiens (strain wPip).